Consider the following 55-residue polypeptide: Myrmicitoxin(1)-Pr6b (55 aa).

A signal peptide spans 1 to 22 (MKIIYAFLLIAVVAFMGSGIMA). Residues 23–29 (ESLAEAI) constitute a propeptide that is removed on maturation.

This sequence belongs to the formicidae venom clade 4 family. Expressed by the venom gland.

The protein localises to the secreted. Its function is as follows. Probable neurotoxin. In Pogonomyrmex rugosus (Desert harvester ant), this protein is Myrmicitoxin(1)-Pr6b.